The primary structure comprises 418 residues: Hydroxysteroid dehydrogenase-like protein 2 (418 aa).

NADP(+) is bound by residues 17–23 (GASRGIG), lysine 42, and aspartate 74. Lysine 42 bears the N6-(2-hydroxyisobutyryl)lysine mark. At lysine 116 the chain carries N6-acetyllysine. Tyrosine 168 functions as the Proton acceptor in the catalytic mechanism. An NADP(+)-binding site is contributed by lysine 172. One can recognise an SCP2 domain in the interval 306 to 415 (RSGAVEETFR…KLEKLMNQMN (110 aa)). Lysine 318 is subject to N6-succinyllysine.

The protein belongs to the short-chain dehydrogenases/reductases (SDR) family. As to expression, ubiquitous.

The protein resides in the peroxisome. Its subcellular location is the mitochondrion. In terms of biological role, has apparently no steroid dehydrogenase activity. Controls bile acid (BA) and lipid metabolism in response to nutritional cues. This Homo sapiens (Human) protein is Hydroxysteroid dehydrogenase-like protein 2.